A 248-amino-acid chain; its full sequence is Exosome complex component Rrp41 (248 aa).

It belongs to the RNase PH family. Rrp41 subfamily. In terms of assembly, component of the archaeal exosome complex. Forms a hexameric ring-like arrangement composed of 3 Rrp41-Rrp42 heterodimers. The hexameric ring associates with a trimer of Rrp4 and/or Csl4 subunits.

It localises to the cytoplasm. In terms of biological role, catalytic component of the exosome, which is a complex involved in RNA degradation. Has 3'-&gt;5' exoribonuclease activity. Can also synthesize heteromeric RNA-tails. This Thermoplasma acidophilum (strain ATCC 25905 / DSM 1728 / JCM 9062 / NBRC 15155 / AMRC-C165) protein is Exosome complex component Rrp41.